The following is a 378-amino-acid chain: Phospho-N-acetylmuramoyl-pentapeptide-transferase (378 aa).

Helical transmembrane passes span 27 to 47 (TAFA…WLIN), 74 to 94 (TMGG…WADL), 96 to 116 (YPYV…GFLD), 135 to 155 (LVYQ…MRAY), 184 to 204 (WTYV…VVFY), 216 to 236 (GLAI…AYAG), 256 to 276 (LTIF…YNAH), 280 to 300 (IFMG…VAVL), 305 to 325 (ILLL…ILQV), and 355 to 375 (KIIA…LTTL).

It belongs to the glycosyltransferase 4 family. MraY subfamily. The cofactor is Mg(2+).

The protein resides in the cell inner membrane. It carries out the reaction UDP-N-acetyl-alpha-D-muramoyl-L-alanyl-gamma-D-glutamyl-meso-2,6-diaminopimeloyl-D-alanyl-D-alanine + di-trans,octa-cis-undecaprenyl phosphate = di-trans,octa-cis-undecaprenyl diphospho-N-acetyl-alpha-D-muramoyl-L-alanyl-D-glutamyl-meso-2,6-diaminopimeloyl-D-alanyl-D-alanine + UMP. It participates in cell wall biogenesis; peptidoglycan biosynthesis. In terms of biological role, catalyzes the initial step of the lipid cycle reactions in the biosynthesis of the cell wall peptidoglycan: transfers peptidoglycan precursor phospho-MurNAc-pentapeptide from UDP-MurNAc-pentapeptide onto the lipid carrier undecaprenyl phosphate, yielding undecaprenyl-pyrophosphoryl-MurNAc-pentapeptide, known as lipid I. This Solibacter usitatus (strain Ellin6076) protein is Phospho-N-acetylmuramoyl-pentapeptide-transferase.